Here is a 145-residue protein sequence, read N- to C-terminus: LWLWPYLFFIEAVPIRKVQDDTKTLIKTIVTRINDISHTQSVSSKQRVTGLDFIPGLHPVLSLSKMDQTLAIYQQILTSLPSRNVIQISNDLENLRDLLHLLASSKSCPLPQARGLETLASLGGVLEASLLLHRGGSPEQAAGVS.

The N-terminal stretch at 1–12 (LWLWPYLFFIEA) is a signal peptide.

This sequence belongs to the leptin family.

It localises to the secreted. Key player in the regulation of energy balance and body weight control. Once released into the circulation, has central and peripheral effects by binding LEPR, found in many tissues, which results in the activation of several major signaling pathways. In the hypothalamus, acts as an appetite-regulating factor that induces a decrease in food intake and an increase in energy consumption by inducing anorexinogenic factors and suppressing orexigenic neuropeptides, also regulates bone mass and secretion of hypothalamo-pituitary-adrenal hormones. In the periphery, increases basal metabolism, influences reproductive function, regulates pancreatic beta-cell function and insulin secretion, is pro-angiogenic for endothelial cell and affects innate and adaptive immunity. In the arcuate nucleus of the hypothalamus, activates by depolarization POMC neurons inducing FOS and SOCS3 expression to release anorexigenic peptides and inhibits by hyperpolarization NPY neurons inducing SOCS3 with a consequent reduction on release of orexigenic peptides. In addition to its known satiety inducing effect, has a modulatory role in nutrient absorption. In the intestine, reduces glucose absorption by enterocytes by activating PKC and leading to a sequential activation of p38, PI3K and ERK signaling pathways which exerts an inhibitory effect on glucose absorption. Acts as a growth factor on certain tissues, through the activation of different signaling pathways increases expression of genes involved in cell cycle regulation such as CCND1, via JAK2-STAT3 pathway, or VEGFA, via MAPK1/3 and PI3K-AKT1 pathways. May also play an apoptotic role via JAK2-STAT3 pathway and up-regulation of BIRC5 expression. Pro-angiogenic, has mitogenic activity on vascular endothelial cells and plays a role in matrix remodeling by regulating the expression of matrix metalloproteinases (MMPs) and tissue inhibitors of metalloproteinases (TIMPs). In innate immunity, modulates the activity and function of neutrophils by increasing chemotaxis and the secretion of oxygen radicals. Increases phagocytosis by macrophages and enhances secretion of pro-inflammatory mediators. Increases cytotoxic ability of NK cells. Plays a pro-inflammatory role, in synergy with IL1B, by inducing NOS2 which promotes the production of IL6, IL8 and Prostaglandin E2, through a signaling pathway that involves JAK2, PI3K, MAP2K1/MEK1 and MAPK14/p38. In adaptive immunity, promotes the switch of memory T-cells towards T helper-1 cell immune responses. Increases CD4(+)CD25(-) T-cell proliferation and reduces autophagy during TCR (T-cell receptor) stimulation, through MTOR signaling pathway activation and BCL2 up-regulation. The polypeptide is Leptin (LEP) (Equus caballus (Horse)).